A 329-amino-acid chain; its full sequence is MSSAQRVVITPGEPAGSGPDLVVQLAQRAWPIELVVCADGALLTERAAMLGLPLSLLPYSPDVPAAPQPAGTLTLLPVSLRAPAISGQLTVENGPYVVETLARACDGCLNGEFAALITGPVHKGVINDAGISFTGHTEFFEERSQAKKVVMMLATEELRVALATTHLPLRAIADAITPALLHEVIAILHHDLRTKFGIAEPRILVCGLNPHAGEGGHMGTEEIDTIIPVLDELRAQGMKLNGPLPADTLFQPKYLDNADAVLAMYHDQGLPVLKYQGFGRGVNITLGLPFIRTSVDHGTALELAGRGKADVGSFITALNLAIKMIVNTQ.

The substrate site is built by H136 and T137. A divalent metal cation contacts are provided by H166, H211, and H266. Residues K274, N283, and R292 each coordinate substrate.

This sequence belongs to the PdxA family. As to quaternary structure, homodimer. Zn(2+) serves as cofactor. It depends on Mg(2+) as a cofactor. The cofactor is Co(2+).

Its subcellular location is the cytoplasm. The catalysed reaction is 4-(phosphooxy)-L-threonine + NAD(+) = 3-amino-2-oxopropyl phosphate + CO2 + NADH. It participates in cofactor biosynthesis; pyridoxine 5'-phosphate biosynthesis; pyridoxine 5'-phosphate from D-erythrose 4-phosphate: step 4/5. Functionally, catalyzes the NAD(P)-dependent oxidation of 4-(phosphooxy)-L-threonine (HTP) into 2-amino-3-oxo-4-(phosphooxy)butyric acid which spontaneously decarboxylates to form 3-amino-2-oxopropyl phosphate (AHAP). The polypeptide is 4-hydroxythreonine-4-phosphate dehydrogenase (Salmonella typhimurium (strain LT2 / SGSC1412 / ATCC 700720)).